Consider the following 93-residue polypeptide: Small ribosomal subunit protein bS18 (93 aa).

The protein belongs to the bacterial ribosomal protein bS18 family. In terms of assembly, part of the 30S ribosomal subunit. Forms a tight heterodimer with protein bS6.

Its function is as follows. Binds as a heterodimer with protein bS6 to the central domain of the 16S rRNA, where it helps stabilize the platform of the 30S subunit. The protein is Small ribosomal subunit protein bS18 of Acidovorax ebreus (strain TPSY) (Diaphorobacter sp. (strain TPSY)).